The following is a 450-amino-acid chain: Phosphoglucosamine mutase (450 aa).

The Phosphoserine intermediate role is filled by Ser101. Residues Ser101, Asp240, Asp242, and Asp244 each coordinate Mg(2+). A Phosphoserine modification is found at Ser101.

The protein belongs to the phosphohexose mutase family. Mg(2+) is required as a cofactor. Post-translationally, activated by phosphorylation.

The catalysed reaction is alpha-D-glucosamine 1-phosphate = D-glucosamine 6-phosphate. In terms of biological role, catalyzes the conversion of glucosamine-6-phosphate to glucosamine-1-phosphate. The polypeptide is Phosphoglucosamine mutase (Streptococcus pneumoniae serotype 4 (strain ATCC BAA-334 / TIGR4)).